Here is a 566-residue protein sequence, read N- to C-terminus: Proline--tRNA ligase (566 aa).

Belongs to the class-II aminoacyl-tRNA synthetase family. ProS type 1 subfamily. Homodimer.

The protein localises to the cytoplasm. The enzyme catalyses tRNA(Pro) + L-proline + ATP = L-prolyl-tRNA(Pro) + AMP + diphosphate. Its function is as follows. Catalyzes the attachment of proline to tRNA(Pro) in a two-step reaction: proline is first activated by ATP to form Pro-AMP and then transferred to the acceptor end of tRNA(Pro). As ProRS can inadvertently accommodate and process non-cognate amino acids such as alanine and cysteine, to avoid such errors it has two additional distinct editing activities against alanine. One activity is designated as 'pretransfer' editing and involves the tRNA(Pro)-independent hydrolysis of activated Ala-AMP. The other activity is designated 'posttransfer' editing and involves deacylation of mischarged Ala-tRNA(Pro). The misacylated Cys-tRNA(Pro) is not edited by ProRS. In Bacillus cereus (strain B4264), this protein is Proline--tRNA ligase.